Consider the following 120-residue polypeptide: Protein CcdB (120 aa).

The 116-residue stretch at 3-118 (RVLVVDDAKF…KVLEAVSRVM (116 aa)) folds into the Response regulatory domain. Position 53 is a 4-aspartylphosphate (Asp-53).

This chain is Protein CcdB (ccdB), found in Bacillus subtilis (strain 168).